Consider the following 166-residue polypeptide: MSKVLEAKQSAVEEIKTKLSASASTVIVDYRGLNVGEITDLRKQLRDAGIEFKVYKNSLTRRAVEANGYEGLEGALTGPNAIAFSNEDVVAPAKILNDFAKDHEALEIKAGVIEGKVASLEEIKALATLPSREGLLSMLCNVLQAPVRGLAIATKAVADQKEGQEA.

It belongs to the universal ribosomal protein uL10 family. As to quaternary structure, part of the ribosomal stalk of the 50S ribosomal subunit. The N-terminus interacts with L11 and the large rRNA to form the base of the stalk. The C-terminus forms an elongated spine to which L12 dimers bind in a sequential fashion forming a multimeric L10(L12)X complex.

Forms part of the ribosomal stalk, playing a central role in the interaction of the ribosome with GTP-bound translation factors. The polypeptide is Large ribosomal subunit protein uL10 (Listeria innocua serovar 6a (strain ATCC BAA-680 / CLIP 11262)).